The sequence spans 208 residues: Urease accessory protein UreE (208 aa).

The tract at residues alanine 145–histidine 195 is disordered.

It belongs to the UreE family.

The protein resides in the cytoplasm. Functionally, involved in urease metallocenter assembly. Binds nickel. Probably functions as a nickel donor during metallocenter assembly. This chain is Urease accessory protein UreE, found in Azorhizobium caulinodans (strain ATCC 43989 / DSM 5975 / JCM 20966 / LMG 6465 / NBRC 14845 / NCIMB 13405 / ORS 571).